The following is a 352-amino-acid chain: Septin-2B (352 aa).

The 273-residue stretch at 33-305 (KGFEFTLMVV…ENFRSERLKK (273 aa)) folds into the Septin-type G domain. Positions 43 to 50 (GESGLGKS) are G1 motif. GTP is bound by residues 43–50 (GESGLGKS), Thr-77, Gly-103, 182–190 (KADTLTLRE), Gly-240, and Arg-255. The segment at 100 to 103 (DTPG) is G3 motif. A G4 motif region spans residues 181-184 (AKAD). The important for dimerization stretch occupies residues 259-269 (WGVVEVENPEH).

It belongs to the TRAFAC class TrmE-Era-EngA-EngB-Septin-like GTPase superfamily. Septin GTPase family. Septins polymerize into heterooligomeric protein complexes that form filaments, and associate with cellular membranes, actin filaments and microtubules. GTPase activity is required for filament formation. Can form heterooligomers with other family members and form filaments. Interacts with wdpcp.

It is found in the cytoplasm. The protein localises to the cytoskeleton. Its subcellular location is the spindle. It localises to the cleavage furrow. The protein resides in the midbody. It is found in the cell projection. The protein localises to the cilium membrane. Its function is as follows. Filament-forming cytoskeletal GTPase. Required for normal organization of the actin cytoskeleton. Plays a role in the biogenesis of polarized columnar-shaped epithelium. Required for the progression through mitosis through regulation of chromosome congression. During anaphase, may be required for chromosome segregation and spindle elongation. Probably plays a role in ciliogenesis and collective cell movements including convergent extension during gastrulation. In cilia, required for the integrity of the diffusion barrier at the base of the primary cilium that prevents diffusion of transmembrane proteins between the cilia and plasma membranes. Controls cell shape and not polarization of cells during convergent extension. The protein is Septin-2B (sept2-b) of Xenopus laevis (African clawed frog).